A 1286-amino-acid chain; its full sequence is DNA-directed RNA polymerase 147 kDa polypeptide (1286 aa).

The protein belongs to the poxviridae DNA-directed RNA polymerase 147 kDa subunit family. In terms of assembly, the DNA-dependent RNA polymerase used for intermediate and late genes expression consists of eight subunits Rpo30/OPG66, Rpo7/OPG90, Rpo22/OPG103, Rpo147/OPG105, Rpo18/OPG119, Rpo19/OPG131, Rpo132/OPG151 and Rpo35/OPG156. The same holoenzyme, with the addition of the transcription-specificity factor OPG109, is used for early gene expression.

It is found in the virion. It carries out the reaction RNA(n) + a ribonucleoside 5'-triphosphate = RNA(n+1) + diphosphate. Its function is as follows. Part of the DNA-dependent RNA polymerase which catalyzes the transcription of viral DNA into RNA using the four ribonucleoside triphosphates as substrates. Responsible for the transcription of early, intermediate and late genes. DNA-dependent RNA polymerase associates with the early transcription factor (ETF), itself composed of OPG118 and OPG133, thereby allowing the early genes transcription. Late transcription, and probably also intermediate transcription, require newly synthesized RNA polymerase. The sequence is that of DNA-directed RNA polymerase 147 kDa polypeptide (OPG105) from Monkeypox virus.